A 227-amino-acid polypeptide reads, in one-letter code: ATP synthase F(0) complex subunit a (227 aa).

Helical transmembrane passes span 9–29 (FASP…LPWV), 69–89 (WALL…LGLL), 98–118 (QLSL…IIGM), 132–152 (EGTP…SLFI), 165–185 (LTAG…LMPM), and 190–210 (AILT…VAMI).

The protein belongs to the ATPase A chain family. Component of the ATP synthase complex composed at least of ATP5F1A/subunit alpha, ATP5F1B/subunit beta, ATP5MC1/subunit c (homooctomer), MT-ATP6/subunit a, MT-ATP8/subunit 8, ATP5ME/subunit e, ATP5MF/subunit f, ATP5MG/subunit g, ATP5MK/subunit k, ATP5MJ/subunit j, ATP5F1C/subunit gamma, ATP5F1D/subunit delta, ATP5F1E/subunit epsilon, ATP5PF/subunit F6, ATP5PB/subunit b, ATP5PD/subunit d, ATP5PO/subunit OSCP. ATP synthase complex consists of a soluble F(1) head domain (subunits alpha(3) and beta(3)) - the catalytic core - and a membrane F(0) domain - the membrane proton channel (subunits c, a, 8, e, f, g, k and j). These two domains are linked by a central stalk (subunits gamma, delta, and epsilon) rotating inside the F1 region and a stationary peripheral stalk (subunits F6, b, d, and OSCP). Interacts with DNAJC30; interaction is direct.

It is found in the mitochondrion inner membrane. It catalyses the reaction H(+)(in) = H(+)(out). Functionally, subunit a, of the mitochondrial membrane ATP synthase complex (F(1)F(0) ATP synthase or Complex V) that produces ATP from ADP in the presence of a proton gradient across the membrane which is generated by electron transport complexes of the respiratory chain. ATP synthase complex consist of a soluble F(1) head domain - the catalytic core - and a membrane F(1) domain - the membrane proton channel. These two domains are linked by a central stalk rotating inside the F(1) region and a stationary peripheral stalk. During catalysis, ATP synthesis in the catalytic domain of F(1) is coupled via a rotary mechanism of the central stalk subunits to proton translocation. With the subunit c (ATP5MC1), forms the proton-conducting channel in the F(0) domain, that contains two crucial half-channels (inlet and outlet) that facilitate proton movement from the mitochondrial intermembrane space (IMS) into the matrix. Protons are taken up via the inlet half-channel and released through the outlet half-channel, following a Grotthuss mechanism. This chain is ATP synthase F(0) complex subunit a, found in Carassius auratus (Goldfish).